Consider the following 516-residue polypeptide: Serine carboxypeptidase-like 49 (516 aa).

The N-terminal stretch at 1–22 (MEKLTFLSLLLHFVVFIASTIP) is a signal peptide. A propeptide spanning residues 23–82 (SSSFLLNDRTFERSNLPSTRAEKLIRELNLFPQQDLNVIDVADLPLTAAEGPGIVERKFV) is cleaved from the precursor. 3 cysteine pairs are disulfide-bonded: Cys-139-Cys-379, Cys-307-Cys-322, and Cys-345-Cys-350. Asn-157 is a glycosylation site (N-linked (GlcNAc...) asparagine). Ser-229 is an active-site residue. The active site involves Asp-417. Cys-420 is a binding site for substrate. His-474 is a catalytic residue.

The protein belongs to the peptidase S10 family. Expressed in roots, senescent leaves and flowers.

It localises to the secreted. Functionally, probable carboxypeptidase. The polypeptide is Serine carboxypeptidase-like 49 (SCPL49) (Arabidopsis thaliana (Mouse-ear cress)).